The primary structure comprises 98 residues: MSRTCELTAKAVQTGNNVSHANNKTKRRFLPNLVNVTLISEALNQNVRLRISANALRSVEHRGGLDAFLAKADVKELSQRARLLKKQIAKKLAEQVAA.

The protein belongs to the bacterial ribosomal protein bL28 family.

In Mesorhizobium japonicum (strain LMG 29417 / CECT 9101 / MAFF 303099) (Mesorhizobium loti (strain MAFF 303099)), this protein is Large ribosomal subunit protein bL28.